The sequence spans 381 residues: L-lactate dehydrogenase (381 aa).

An FMN hydroxy acid dehydrogenase domain is found at 1–380 (MIISASTDYR…NRDSLAVSER (380 aa)). Y24 lines the substrate pocket. 2 residues coordinate FMN: S106 and Q127. Y129 contacts substrate. T155 contacts FMN. R164 is a binding site for substrate. K251 provides a ligand contact to FMN. The active-site Proton acceptor is H275. Substrate is bound at residue R278. Residue 306 to 330 (DSGIRTGLDVVRMIALGADSVLLGR) participates in FMN binding.

Belongs to the FMN-dependent alpha-hydroxy acid dehydrogenase family. It depends on FMN as a cofactor.

The protein resides in the cell inner membrane. It catalyses the reaction (S)-lactate + A = pyruvate + AH2. In terms of biological role, catalyzes the conversion of L-lactate to pyruvate. Is coupled to the respiratory chain. In Yersinia pseudotuberculosis serotype O:1b (strain IP 31758), this protein is L-lactate dehydrogenase.